The following is a 299-amino-acid chain: Ankyrin repeat domain-containing protein 54 (299 aa).

The disordered stretch occupies residues Met-1 to Gly-32. Residue Ala-2 is modified to N-acetylalanine. Residues Ser-57 and Ser-62 each carry the phosphoserine modification. The Nuclear localization signal (NLS) signature appears at Arg-98–Ser-116. 4 ANK repeats span residues His-108–Ala-137, Lys-141–Gln-170, Leu-174–Ala-203, and Ala-207–Gln-239. Positions Asp-140 to Ile-240 are LYN-binding. A Nuclear export signal (NES) motif is present at residues Leu-282–Gln-292.

As to quaternary structure, interacts (via ankyrin repeat region) with LYN (via SH3-domain) in an activation-independent status of LYN. Forms a multiprotein complex with LYN and HCLS1. Interacts with TSN2, VAV1, DBNL and LASP1.

It localises to the nucleus. The protein resides in the cytoplasm. Its subcellular location is the midbody. In terms of biological role, plays an important role in regulating intracellular signaling events associated with erythroid terminal differentiation. The sequence is that of Ankyrin repeat domain-containing protein 54 (ANKRD54) from Bos taurus (Bovine).